An 860-amino-acid chain; its full sequence is Nuclear pore complex protein NUP93B (860 aa).

It belongs to the nucleoporin interacting component (NIC) family. As to quaternary structure, part of the nuclear pore complex (NPC). The NPC has an eight-fold symmetrical structure comprising a central transport channel and two rings, the cytoplasmic and nuclear rings, to which eight filaments are attached. The cytoplasmic filaments have loose ends, while the nuclear filaments are joined in a distal ring, forming a nuclear basket. NPCs are highly dynamic in configuration and composition, and can be devided in 3 subcomplexes, the NUP62 subcomplex, the NUP107-160 subcomplex and the NUP93 subcomplex, containing approximately 30 different nucleoporin proteins.

Its subcellular location is the nucleus envelope. The protein resides in the nucleus. It is found in the nuclear pore complex. This chain is Nuclear pore complex protein NUP93B, found in Arabidopsis thaliana (Mouse-ear cress).